The chain runs to 345 residues: Ryncolin-4 (345 aa).

A signal peptide spans 1–19 (MKPWAAFHLIFLVASSLEG). The tract at residues 48-118 (ILQSQPGIPG…DKGDKGEDCN (71 aa)) is disordered. A Collagen-like domain is found at 57–114 (GIPGVPGTNGSEGLKGDPGPQGPPGIRGPDGIRGEAGPKGDKGDQGDKGDKGDKGDKG). Residues 86 to 116 (DGIRGEAGPKGDKGDQGDKGDKGDKGDKGED) show a composition bias toward basic and acidic residues. The Fibrinogen C-terminal domain maps to 121-339 (DCLPTEVRNC…YADMKIRPQK (219 aa)). Disulfide bonds link C130–C158 and C282–C295.

It belongs to the ficolin lectin family. Veficolin subfamily. Post-translationally, hydroxylated, possibly at Pro-80. In terms of tissue distribution, expressed by the venom duct.

The protein localises to the secreted. Functionally, initiates complement activation and/or interferes in platelet aggregation and/or blood coagulation. In Cerberus rynchops (Dog-faced water snake), this protein is Ryncolin-4.